The sequence spans 430 residues: MFVDQVKISLKAGDGGNGITAYRREKYVPFGGPAGGDGGKGASVVFEVDEGLRTLLDFRYQRHFKASKGENGQSSNMHGKNAEDLVLKVPPGTIIKNVETDEVLADLVEDGQRAVVAKGGRGGRGNSRFATPRNPAPDFSEKGEPGEELDVSLELKLLADVGLVGFPSVGKSTLLSIVSKAKPKIGAYHFTTIKPNLGVVSTPDQRSFVMADLPGLIEGASDGVGLGHQFLRHVERTKVIVHMIDMSGSEGREPIEDYKVINQELAAYEQRLEDRPQIVVANKMDLPESQDNLILFKEEIGEDVPVIPVSTITRDNIDQLLYAIADKLEEYKDVDFTVEEEESVGINRVLYKHTPSQDKFTISRDDDGAYVVSGNAIERMFKMTDFNSDPAVRRFARQMRSMGIDDALRERGCKNGDIVRILGGEFEFVE.

The Obg domain occupies 1-158 (MFVDQVKISL…LDVSLELKLL (158 aa)). The segment at 118–145 (KGGRGGRGNSRFATPRNPAPDFSEKGEP) is disordered. An OBG-type G domain is found at 159–329 (ADVGLVGFPS…LLYAIADKLE (171 aa)). Residues 165–172 (GFPSVGKS), 190–194 (FTTIK), 212–215 (DLPG), 282–285 (NKMD), and 310–312 (STI) contribute to the GTP site. Mg(2+) is bound by residues S172 and T192. An OCT domain is found at 352–430 (KHTPSQDKFT…ILGGEFEFVE (79 aa)).

The protein belongs to the TRAFAC class OBG-HflX-like GTPase superfamily. OBG GTPase family. As to quaternary structure, monomer. Mg(2+) serves as cofactor.

Its subcellular location is the cytoplasm. Functionally, an essential GTPase which binds GTP, GDP and possibly (p)ppGpp with moderate affinity, with high nucleotide exchange rates and a fairly low GTP hydrolysis rate. Plays a role in control of the cell cycle, stress response, ribosome biogenesis and in those bacteria that undergo differentiation, in morphogenesis control. This is GTPase Obg from Staphylococcus aureus (strain MRSA252).